Reading from the N-terminus, the 208-residue chain is Small ribosomal subunit protein uS4 (208 aa).

Positions R98–N158 constitute an S4 RNA-binding domain.

The protein belongs to the universal ribosomal protein uS4 family. As to quaternary structure, part of the 30S ribosomal subunit. Contacts protein S5. The interaction surface between S4 and S5 is involved in control of translational fidelity.

One of the primary rRNA binding proteins, it binds directly to 16S rRNA where it nucleates assembly of the body of the 30S subunit. Functionally, with S5 and S12 plays an important role in translational accuracy. This chain is Small ribosomal subunit protein uS4, found in Geobacter metallireducens (strain ATCC 53774 / DSM 7210 / GS-15).